The primary structure comprises 658 residues: uncharacterized protein (658 aa).

Low complexity predominate over residues 516–639; it reads SSNNSNSSNN…NNNNNSSQGG (124 aa). Residues 516–646 form a disordered region; that stretch reads SSNNSNSSNN…QGGNSQGGSG (131 aa).

The protein resides in the cytoplasm. This is an uncharacterized protein from Schizosaccharomyces pombe (strain 972 / ATCC 24843) (Fission yeast).